The primary structure comprises 556 residues: Endoplasmic reticulum membrane protein 65 (556 aa).

Residues 1-87 lie on the Cytoplasmic side of the membrane; the sequence is MQHKDTAVAK…IRIPMFLEKF (87 aa). S22 is modified (phosphoserine). A helical transmembrane segment spans residues 88–108; sequence MLFALLTSLDCFLYYFTVLPI. Topologically, residues 109–151 are lumenal; the sequence is RLIKGYVKQFKSYRQHYRLQQRSGHKNKIPFRYRITSREYKER. A helical membrane pass occupies residues 152-172; it reads CMIFIIVISSILLSKLDTSKL. Topologically, residues 173-224 are cytoplasmic; the sequence is YHRIKRQSTMKLYMLFSVLEMADKMLASLGQSLLTVMLSRKNSERILLHKCL. Residues 225–245 traverse the membrane as a helical segment; sequence LVSMSLTYVTIHGYVLVYQAI. At 246–330 the chain is on the lumenal side; that stretch reads SLNIAVNSYS…INFWSPRSTL (85 aa). The N-linked (GlcNAc...) asparagine glycan is linked to N318. The chain crosses the membrane as a helical span at residues 331–351; the sequence is SIVINILCGPMVSVVGSEVLV. Topologically, residues 352 to 391 are cytoplasmic; sequence DWAKHAYITKFNRIRPQIYDKFYYIIYKDYSTRTHKLEDR. Residues 392–412 traverse the membrane as a helical segment; sequence LGLPLPAFVVLFIVMVRPTLF. Residues 413–428 are Lumenal-facing; sequence KSSEPSYLPSLFRILF. The helical transmembrane segment at 429 to 449 threads the bilayer; that stretch reads MGASVFLLALLAKFTLDLILI. Residues 450-556 are Cytoplasmic-facing; the sequence is KWSKRIEQRF…RYKMVSKRIW (107 aa).

The protein belongs to the TAPT1 family. As to quaternary structure, interacts with SLP1.

Its subcellular location is the endoplasmic reticulum membrane. The protein resides in the mitochondrion. Its function is as follows. May be involved in membrane protein folding. The protein is Endoplasmic reticulum membrane protein 65 of Saccharomyces cerevisiae (strain ATCC 204508 / S288c) (Baker's yeast).